We begin with the raw amino-acid sequence, 132 residues long: Replication enhancer protein (132 aa).

This sequence belongs to the geminiviridae replication enhancer protein family. As to quaternary structure, homooligomer. Interacts with the replication-associated protein (REP). Interacts with host proliferating cell nuclear antigen (PCNA). Interacts with host retinoblastoma-related protein 1 (RBR1), and may thereby deregulate the host cell cycle. Oligomerization and interaction with PCNA are necessary for optimal replication enhancement.

Functionally, increases viral DNA accumulation. Enhances infectivity and symptom expression. The chain is Replication enhancer protein from Cabbage leaf curl virus (isolate Jamaica) (CaLCuV).